A 213-amino-acid polypeptide reads, in one-letter code: MSNPSCIIIAITGASASGKSSISSTVHKELCNELGCQEIGIITEDSYYKDQSHLEMTERVKTNYDHPSSMDRDLLIQHLKNLKNGSAVDVPVYSYVEHTRTNETTHFTPKRIVILEGILLLTDERVRQLADISVFVDTPLDICFIRRLQRDMEERGRSLQSVIDQYRATVRPMFLQFIEPSKQYADIVIPRGGKNRIAINMLKAQILHLLNQK.

Residue 13 to 20 (GASASGKS) participates in ATP binding.

It belongs to the uridine kinase family.

It is found in the cytoplasm. The enzyme catalyses uridine + ATP = UMP + ADP + H(+). It carries out the reaction cytidine + ATP = CMP + ADP + H(+). It participates in pyrimidine metabolism; CTP biosynthesis via salvage pathway; CTP from cytidine: step 1/3. Its pathway is pyrimidine metabolism; UMP biosynthesis via salvage pathway; UMP from uridine: step 1/1. The sequence is that of Uridine kinase from Haemophilus influenzae (strain PittEE).